The following is a 549-amino-acid chain: Glucose-6-phosphate isomerase (549 aa).

Residue Glu354 is the Proton donor of the active site. Residues His385 and Lys513 contribute to the active site.

This sequence belongs to the GPI family.

It is found in the cytoplasm. It carries out the reaction alpha-D-glucose 6-phosphate = beta-D-fructose 6-phosphate. It participates in carbohydrate biosynthesis; gluconeogenesis. The protein operates within carbohydrate degradation; glycolysis; D-glyceraldehyde 3-phosphate and glycerone phosphate from D-glucose: step 2/4. In terms of biological role, catalyzes the reversible isomerization of glucose-6-phosphate to fructose-6-phosphate. This is Glucose-6-phosphate isomerase from Nitrosococcus oceani (strain ATCC 19707 / BCRC 17464 / JCM 30415 / NCIMB 11848 / C-107).